Reading from the N-terminus, the 803-residue chain is Na(+)/H(+) antiporter subunit A1 (803 aa).

Helical transmembrane passes span 1–21 (MSLL…IPIL), 30–50 (LGWF…SLIS), 79–99 (LSIL…LYSI), 117–137 (LFMG…LYLF), 166–186 (LIIT…ISLA), 208–228 (FIFA…QVPF), 265–285 (LFAI…ITLF), 300–320 (ILAF…GIGA), 337–357 (FTAA…LFMI), 377–397 (LTIM…MAGI), 427–447 (LGIV…VYSI), 472–492 (ILML…GLFP), 522–542 (GITP…LLLL), 591–611 (LVII…SVPF), 621–641 (IHIY…MVVI), 646–666 (LFSV…FVFF), 671–691 (LALT…LCFY), 707–727 (LTNA…GLIA), and 764–784 (MDTL…YTMI).

This sequence belongs to the CPA3 antiporters (TC 2.A.63) subunit A family. In terms of assembly, may form a heterooligomeric complex that consists of seven subunits: mnhA1, mnhB1, mnhC1, mnhD1, mnhE1, mnhF1 and mnhG1.

The protein resides in the cell membrane. Its function is as follows. Mnh complex is a Na(+)/H(+) antiporter involved in Na(+) excretion. The polypeptide is Na(+)/H(+) antiporter subunit A1 (mnhA1) (Staphylococcus haemolyticus (strain JCSC1435)).